Here is a 400-residue protein sequence, read N- to C-terminus: Cytohesin-3 (400 aa).

A coiled-coil region spans residues Glu14–Ser61. The SEC7 domain maps to Phe77–Asn206. One can recognise a PH domain in the interval Pro265–Ser381. A 1,2-diacyl-sn-glycero-3-phospho-(1D-myo-inositol-3,4,5-trisphosphate) is bound by residues Lys273–Thr281, Arg285, Tyr296, Arg306, and Asn355. A C-terminal autoinhibitory region region spans residues Arg392–Lys400.

As to quaternary structure, interacts with TAMALIN. As to expression, present in all tissues tested, with highest protein levels in brain and adrenal.

It is found in the cytoplasm. The protein resides in the cytosol. Its subcellular location is the cell membrane. Its function is as follows. Promotes guanine-nucleotide exchange on ARF1. Promotes the activation of ARF factors through replacement of GDP with GTP. The protein is Cytohesin-3 (Cyth3) of Rattus norvegicus (Rat).